Consider the following 469-residue polypeptide: Programmed cell death protein 4 (469 aa).

Methionine 1 is subject to N-acetylmethionine. The segment covering methionine 1–leucine 23 has biased composition (polar residues). Disordered regions lie at residues methionine 1–lysine 37 and lysine 58–glycine 128. Serine 25 carries the phosphoserine modification. Residues lysine 58–arginine 64 carry the Nuclear localization signal motif. Position 67 is a phosphoserine; by PKB and RPS6KB1 (serine 67). A phosphoserine mark is found at serine 68, serine 71, serine 76, serine 78, and serine 94. Residues aspartate 70–serine 76 carry the Phosphodegron motif. The segment covering lysine 114 to glycine 125 has biased composition (gly residues). Tyrosine 152 is subject to Phosphotyrosine. The 122-residue stretch at alanine 163–glycine 284 folds into the MI 1 domain. Serine 313 and serine 317 each carry phosphoserine. Positions histidine 326–serine 449 constitute an MI 2 domain. A Nuclear localization signal motif is present at residues proline 448–arginine 454. At serine 457 the chain carries Phosphoserine; by PKB.

The protein belongs to the PDCD4 family. In terms of assembly, interacts (via MI domains) with EIF4A1 and EIF4A2 (via N-terminal domain). Heterotrimer with EIF4A1; one molecule of PDCD4 binds two molecules of EIF4A1. Interacts with EIF4G1. May form a complex with EIF4A1 and EIF4G1. The interaction between PDCD4 and EIF4A1 interferes with the interaction between EIF4A1 and EIF4G. When phosphorylated, interacts with BTRC and FBXW11. Polyubiquitinated, leading to its proteasomal degradation. Rapidly degraded in response to mitogens. Phosphorylation of the phosphodegron promotes interaction with BTRC and proteasomal degradation. Post-translationally, phosphorylated at Ser-67 by RPS6KB1 in response to mitogens; phosphorylation promotes proteasomal degradation of PDCD4. In terms of tissue distribution, expressed ubiquitously. Highyly expressed in thymus and liver. Moderately expressed in brain, kidney and spleen; weakly in lung and heart. Expression is up- or down-regulated in response to apoptosis inducers. Regulated by many programmed cell death-inducing stimuli.

Its subcellular location is the nucleus. The protein resides in the cytoplasm. In terms of biological role, inhibits translation initiation and cap-dependent translation. May excert its function by hindering the interaction between EIF4A1 and EIF4G. Inhibits the helicase activity of EIF4A. Modulates the activation of JUN kinase. Down-regulates the expression of MAP4K1, thus inhibiting events important in driving invasion, namely, MAPK85 activation and consequent JUN-dependent transcription. May play a role in apoptosis. Tumor suppressor. Inhibits tumor promoter-induced neoplastic transformation. Binds RNA. This chain is Programmed cell death protein 4 (Pdcd4), found in Mus musculus (Mouse).